Reading from the N-terminus, the 207-residue chain is Large ribosomal subunit protein uL4 (207 aa).

The segment at 48–78 (THKVKTRSEVRGGGRKPWRQKGTGRARQGSI) is disordered. A compositionally biased stretch (basic residues) spans 60 to 71 (GGRKPWRQKGTG).

Belongs to the universal ribosomal protein uL4 family. In terms of assembly, part of the 50S ribosomal subunit.

Its function is as follows. One of the primary rRNA binding proteins, this protein initially binds near the 5'-end of the 23S rRNA. It is important during the early stages of 50S assembly. It makes multiple contacts with different domains of the 23S rRNA in the assembled 50S subunit and ribosome. In terms of biological role, forms part of the polypeptide exit tunnel. The sequence is that of Large ribosomal subunit protein uL4 from Bacillus pumilus (strain SAFR-032).